Here is a 382-residue protein sequence, read N- to C-terminus: MDESIKKLPDLAIADLIFTVKLEGKTGTESYNKLIKEIETHKMLPLYKILVEQLKWTEDQGLVSKLKAENESELKALDNKITDSVENFGESEIREAYLAKSDFYCRIGDKDTAVEMYRQTFEKTVPLGQKLDIVFTLIRMGIFWMDHDIVTRNLEKAQSLVEEGGDWDRKNRLKTYEAVYKMSIRQFKEASDLYLETVASFTSTEFIDYSRFIQYLIFTSLLHLDRVSLKQKVIDSPDVLSVINDTPKLQDLLQSFYNGDYANFFGALAHFSDSIKGDRYLAEHSRFFTREMRILAYNQFLESYSSVKLESMSNQFGVSYDFIDRELSRFVAAGRLNCKIDKVSGVIETTRSDAKNHLYKTTLQQGDNLLNRVQKLSRVINV.

In terms of domain architecture, PCI spans 186-354; that stretch reads QFKEASDLYL…GVIETTRSDA (169 aa).

This sequence belongs to the proteasome subunit S10 family.

Acts as a regulatory subunit of the 26S proteasome which is involved in the ATP-dependent degradation of ubiquitinated proteins. This is 26S proteasome non-ATPase regulatory subunit 6 (psmD6) from Dictyostelium discoideum (Social amoeba).